Reading from the N-terminus, the 28-residue chain is Omega-conotoxin-like CnVIIH (28 aa).

Disulfide bonds link C1/C16, C8/C20, and C15/C27. Residue P7 is modified to 4-hydroxyproline; partial. The residue at position 12 (M12) is a Methionine sulfoxide. Residue C27 is modified to Cysteine amide.

This sequence belongs to the conotoxin O1 superfamily. In terms of tissue distribution, expressed by the venom duct.

The protein resides in the secreted. In terms of biological role, omega-conotoxins act at presynaptic membranes, they bind and block voltage-gated calcium channels (Cav). This toxin blocks N-type calcium channels (Cav2.2/CACNA1B) with high potency. Unexpectedly, it does not show any blocking activity at amphibian neuromuscular junction. In vivo, when intracerebroventricularly injected into mice causes shaking activity, and, at higher doses, causes mild tremors. When injected intramuscularly into fish, it causes paralysis, and, at higher doses, causes death. The sequence is that of Omega-conotoxin-like CnVIIH from Conus consors (Singed cone).